The primary structure comprises 559 residues: MMEEFSYDHDFNTHFATDLDYLQHDQQQQQQQQHDQQHNQQQQPQPQPIQTQNLEHDHDQHTNDMSASSNASDSGPQRPKRTRAKGEALDVLKRKFEINPTPSLVERKKISDLIGMPEKNVRIWFQNRRAKLRKKQHGSNKDTIPSSQSRDIANDYDRGSTDNNLVTTTSTSSIFHDEDLTFFDRIPLNSNNNYYFFDICSITVGSWNRMKSGALQRRNFQSIKELRNLSPIKINNIMSNATDLMVLISKKNSEINYFFSAMANNTKILFRIFFPLSSVTNCSLTLETDDDIINSNNTSDKNNSNTNNDDDNDDNSNEDNDNSSEDKRNAKDNFGELKLTVTRSPTFAVYFLNNAPDEDPNLNNQWSICDDFSEGRQVNDAFVGGSNIPHTLKGLQKSLRFMNSLILDYKSSNEILPTINTAIPTAAVPQQNIAPPFLNTNSSATDSNPNTNLEDSLFFDHDLLSSSITNTNNGQGSNNGRQASKDDTLNLLDTTVNSNNNHNANNEENHLAQEHLSNDADIVANPNDHLLSLPTDSELPNTPDFLKNTNELTDEHRWI.

4 disordered regions span residues 16-88 (ATDL…KGEA), 132-158 (LRKK…DYDR), 293-333 (INSN…AKDN), and 534-559 (PTDS…HRWI). Composition is skewed to low complexity over residues 24 to 52 (HDQQ…IQTQ) and 63 to 74 (NDMSASSNASDS). The segment at residues 77 to 136 (QRPKRTRAKGEALDVLKRKFEINPTPSLVERKKISDLIGMPEKNVRIWFQNRRAKLRKKQ) is a DNA-binding region (homeobox). Residues 141–151 (KDTIPSSQSRD) are compositionally biased toward polar residues. Over residues 293–307 (INSNNTSDKNNSNTN) the composition is skewed to low complexity. Over residues 308–323 (NDDDNDDNSNEDNDNS) the composition is skewed to acidic residues. Over residues 324-333 (SEDKRNAKDN) the composition is skewed to basic and acidic residues. Phosphothreonine is present on Thr542.

The protein localises to the nucleus. In terms of biological role, regulator in phosphate metabolism and acts as a derepressor of another central regulator PHO5. Binds to the upstream activator sequence (UAS) of PHO5. It also binds to the TRP4, HIS4, and CYC1 promoters. This Saccharomyces cerevisiae (strain ATCC 204508 / S288c) (Baker's yeast) protein is Regulatory protein PHO2 (PHO2).